Consider the following 119-residue polypeptide: Urotensin-2B (119 aa).

Positions 1–28 (MNKILSSTVCFGLLTLLSVLSFLQSVHG) are cleaved as a signal peptide. Residues 29–109 (RPYLTQGNEI…VDGLFSSHPS (81 aa)) constitute a propeptide that is removed on maturation. The cysteines at positions 113 and 118 are disulfide-linked.

The protein belongs to the urotensin-2 family.

It localises to the secreted. Potent vasoconstrictor. The polypeptide is Urotensin-2B (UTS2B) (Homo sapiens (Human)).